We begin with the raw amino-acid sequence, 439 residues long: Arginine biosynthesis bifunctional protein ArgJ, mitochondrial (439 aa).

Residues Thr175, Lys201, Thr212, Glu301, Asn434, and Ser439 each coordinate substrate. Thr212 acts as the Nucleophile in catalysis.

Belongs to the ArgJ family. Heterodimer of an alpha and a beta chain. In terms of processing, the alpha and beta chains are autoproteolytically processed from a single precursor protein within the mitochondrion.

Its subcellular location is the mitochondrion matrix. It carries out the reaction N(2)-acetyl-L-ornithine + L-glutamate = N-acetyl-L-glutamate + L-ornithine. It catalyses the reaction L-glutamate + acetyl-CoA = N-acetyl-L-glutamate + CoA + H(+). It participates in amino-acid biosynthesis; L-arginine biosynthesis; L-ornithine and N-acetyl-L-glutamate from L-glutamate and N(2)-acetyl-L-ornithine (cyclic): step 1/1. The protein operates within amino-acid biosynthesis; L-arginine biosynthesis; N(2)-acetyl-L-ornithine from L-glutamate: step 1/4. Catalyzes two activities which are involved in the cyclic version of arginine biosynthesis: the synthesis of acetylglutamate from glutamate and acetyl-CoA, and of ornithine by transacetylation between acetylornithine and glutamate. This Candida albicans (strain SC5314 / ATCC MYA-2876) (Yeast) protein is Arginine biosynthesis bifunctional protein ArgJ, mitochondrial (ECM42).